A 395-amino-acid chain; its full sequence is Renin (395 aa).

An N-terminal signal peptide occupies residues 1–21; that stretch reads MLRSWEFVLLISCFLCFSSDA. A propeptide spans 22–43 (activation peptide); sequence LQRISLKKMPSIRETLQEMGMK. N-linked (GlcNAc...) asparagine glycosylation is present at Asn64. Residues 79–392 form the Peptidase A1 domain; that stretch reads YYGEISIGTP…DRQNNRIGFA (314 aa). Residue Asp97 is part of the active site. 2 disulfide bridges follow: Cys110–Cys117 and Cys274–Cys278. Residue Asp283 is part of the active site. The cysteines at positions 316 and 351 are disulfide-linked.

The protein belongs to the peptidase A1 family. N-glycosylated. Expressed by the venom gland (at protein level).

It localises to the secreted. It catalyses the reaction Cleavage of Leu-|-Xaa bond in angiotensinogen to generate angiotensin I.. Inhibited completely by aspartyl protease inhibitor pepstatin A, but not by the serine- or metalloproteinase inhibitors PMSF or EDTA. Its function is as follows. Renin is a highly specific endopeptidase, whose only known function is to generate angiotensin I from angiotensinogen in the plasma, initiating a cascade of reactions that produce an elevation of blood pressure and increased sodium retention by the kidney. This protein is also found in snake venom and shown to specifically cleave human and porcine angiotensinogen into angiotensin I. It does not have general protease activity, no cleavage of alpha or beta casein. May be directly responsible for elevation of blood pressure in the victims of envenomation. In Echis ocellatus (Ocellated saw-scaled viper), this protein is Renin.